The chain runs to 115 residues: MKGWLFLVIAIVGEVIATSALKSSEGFTKLAPSAVVIIGYGIAFYFLSLVLKSIPVGVAYAVWSGLGVVIITAIAWLLHGQKLDAWGFVGMGLIIAAFLLARSPSWKSLRRPTPW.

The next 4 membrane-spanning stretches (helical) occupy residues Trp4 to Leu21, Leu30 to Leu47, Val58 to His79, and Ala85 to Pro104.

Belongs to the drug/metabolite transporter (DMT) superfamily. Small multidrug resistance (SMR) (TC 2.A.7.1) family.

Its subcellular location is the cell membrane. Functionally, one of the determinants for resistance to ethidium bromide and quaternary ammonium compounds. The chain is Putative ethidium bromide resistance protein (ebr) from Escherichia coli.